A 269-amino-acid chain; its full sequence is UPF0739 protein C1orf74 (269 aa).

Belongs to the UPF0739 family.

The polypeptide is UPF0739 protein C1orf74 (C1orf74) (Homo sapiens (Human)).